A 623-amino-acid chain; its full sequence is Mu-like prophage FluMu defective tail fiber protein (623 aa).

The protein to phage Mu protein S.

The protein is Mu-like prophage FluMu defective tail fiber protein of Haemophilus influenzae (strain ATCC 51907 / DSM 11121 / KW20 / Rd).